Here is a 590-residue protein sequence, read N- to C-terminus: Probable metalloendopeptidase G1-type (590 aa).

Position 41 (His-41) interacts with Zn(2+). Glu-44 is an active-site residue. A Zn(2+)-binding site is contributed by His-45.

This sequence belongs to the peptidase M44 family. Zn(2+) is required as a cofactor.

In terms of biological role, seems to be involved in viral proteins maturation by cleavage at Ala-Gly-|-Xaa motifs. This Oryctolagus cuniculus (Rabbit) protein is Probable metalloendopeptidase G1-type.